The sequence spans 393 residues: Protein TsgA (393 aa).

12 consecutive transmembrane segments (helical) span residues 11–31, 51–71, 78–98, 101–121, 134–154, 162–182, 206–226, 245–265, 273–293, 298–318, 332–352, and 361–381; these read WISF…GMVM, FLNA…EIIP, FGFI…SLAL, AAMF…TFLI, LLFT…VAAF, WYWV…LTFG, IGVL…LGFI, ALVS…SFIL, ILTV…TGTQ, WFIL…ITLG, FILT…GPIV, and LLTA…LGFV.

Belongs to the major facilitator superfamily. TsgA family.

Its subcellular location is the cell inner membrane. The polypeptide is Protein TsgA (Salmonella paratyphi B (strain ATCC BAA-1250 / SPB7)).